Reading from the N-terminus, the 176-residue chain is MAENSDITSLEDSFRKFAIYGDTKATGQEMTGKNWSKLCKDCKVNDGKAVTGTDVDIVFSKVKAKSARVITYEEFTKALEELSAKRFKGKSKEEAYEAICKLVAGKEPVSAGITKAAATGAVDRLTDTSKYTGSHKERFDQTGKGKGKSGRETIVENTGYVGSYKLAGTYDAKVKK.

Residues 132-151 (TGSHKERFDQTGKGKGKSGR) form a disordered region. Residues 134–151 (SHKERFDQTGKGKGKSGR) are compositionally biased toward basic and acidic residues.

It belongs to the TPPP family.

It localises to the cytoplasm. It is found in the cytoskeleton. Regulator of microtubule dynamic that has microtubule bundling activity. In Xenopus laevis (African clawed frog), this protein is Tubulin polymerization-promoting protein family member 3 (tppp3).